The following is a 365-amino-acid chain: MWLQHLSLKTFRNYKETKIDFNPKLNVFLGRNAQGKTNMLEAIYFLALTRSHRTRTDKNLIHFDEEQLHLSGLVQKKTGSIPLEIELTQKGRVTKVNHLKQARLSDYVGHMNVVLFAPEDLQLIKGAPSIRRKFIDMELGQIKPIYLSDLTNYNHILKQRNTYLKSAQKIDETFLSVLDDQLVDYGCRVMNHRLDFIKKLESFGRKKHFELSNQIEELSISYQSSVNITDKQNLSESFKIALEKSRSRDLFKKNTGVGPHRDDISFYINGMDASFGSQGQHRSLVLSIKLAEIELMESITTESPILLLDDVMSELDNTRQLKLLETISQSIQTFITTTSLDHLQNLPENLSIFTIQDGKASVNGN.

30-37 (GRNAQGKT) provides a ligand contact to ATP.

Belongs to the RecF family.

It localises to the cytoplasm. The RecF protein is involved in DNA metabolism; it is required for DNA replication and normal SOS inducibility. RecF binds preferentially to single-stranded, linear DNA. It also seems to bind ATP. This chain is DNA replication and repair protein RecF, found in Streptococcus pneumoniae serotype 2 (strain D39 / NCTC 7466).